A 511-amino-acid polypeptide reads, in one-letter code: ATP synthase subunit alpha (511 aa).

169-176 (GDRQTGKT) contributes to the ATP binding site.

Belongs to the ATPase alpha/beta chains family. In terms of assembly, F-type ATPases have 2 components, CF(1) - the catalytic core - and CF(0) - the membrane proton channel. CF(1) has five subunits: alpha(3), beta(3), gamma(1), delta(1), epsilon(1). CF(0) has three main subunits: a(1), b(2) and c(9-12). The alpha and beta chains form an alternating ring which encloses part of the gamma chain. CF(1) is attached to CF(0) by a central stalk formed by the gamma and epsilon chains, while a peripheral stalk is formed by the delta and b chains.

It localises to the cell inner membrane. The enzyme catalyses ATP + H2O + 4 H(+)(in) = ADP + phosphate + 5 H(+)(out). Produces ATP from ADP in the presence of a proton gradient across the membrane. The alpha chain is a regulatory subunit. The protein is ATP synthase subunit alpha of Bartonella quintana (strain Toulouse) (Rochalimaea quintana).